Reading from the N-terminus, the 134-residue chain is Ribonuclease P protein component (134 aa).

The protein belongs to the RnpA family. In terms of assembly, consists of a catalytic RNA component (M1 or rnpB) and a protein subunit.

It carries out the reaction Endonucleolytic cleavage of RNA, removing 5'-extranucleotides from tRNA precursor.. In terms of biological role, RNaseP catalyzes the removal of the 5'-leader sequence from pre-tRNA to produce the mature 5'-terminus. It can also cleave other RNA substrates such as 4.5S RNA. The protein component plays an auxiliary but essential role in vivo by binding to the 5'-leader sequence and broadening the substrate specificity of the ribozyme. The polypeptide is Ribonuclease P protein component (Ectopseudomonas mendocina (strain ymp) (Pseudomonas mendocina)).